Consider the following 420-residue polypeptide: UDP-N-acetylglucosamine 1-carboxyvinyltransferase (420 aa).

22–23 (KN) contacts phosphoenolpyruvate. R93 is a UDP-N-acetyl-alpha-D-glucosamine binding site. C117 acts as the Proton donor in catalysis. C117 is subject to 2-(S-cysteinyl)pyruvic acid O-phosphothioketal. Residues D307 and I329 each contribute to the UDP-N-acetyl-alpha-D-glucosamine site.

This sequence belongs to the EPSP synthase family. MurA subfamily.

It localises to the cytoplasm. The catalysed reaction is phosphoenolpyruvate + UDP-N-acetyl-alpha-D-glucosamine = UDP-N-acetyl-3-O-(1-carboxyvinyl)-alpha-D-glucosamine + phosphate. Its pathway is cell wall biogenesis; peptidoglycan biosynthesis. In terms of biological role, cell wall formation. Adds enolpyruvyl to UDP-N-acetylglucosamine. The sequence is that of UDP-N-acetylglucosamine 1-carboxyvinyltransferase from Saccharophagus degradans (strain 2-40 / ATCC 43961 / DSM 17024).